A 448-amino-acid polypeptide reads, in one-letter code: Phosphoglucosamine mutase (448 aa).

S100 (phosphoserine intermediate) is an active-site residue. Residues S100, D240, D242, and D244 each coordinate Mg(2+). Residue S100 is modified to Phosphoserine.

The protein belongs to the phosphohexose mutase family. Mg(2+) is required as a cofactor. Post-translationally, activated by phosphorylation.

It catalyses the reaction alpha-D-glucosamine 1-phosphate = D-glucosamine 6-phosphate. Catalyzes the conversion of glucosamine-6-phosphate to glucosamine-1-phosphate. This Bacillus cereus (strain B4264) protein is Phosphoglucosamine mutase.